A 266-amino-acid chain; its full sequence is RNA polymerase II subunit A C-terminal domain phosphatase ssu-72 (266 aa).

The tract at residues 1-31 (MSAVDTPTGAASSSKPDQNEQNGQNGGREDS) is disordered. Residues 9-23 (GAASSSKPDQNEQNG) show a composition bias toward polar residues.

Belongs to the SSU72 phosphatase family. In terms of assembly, component of the cleavage and polyadenylation factor (CPF) complex.

Its subcellular location is the nucleus. It catalyses the reaction O-phospho-L-seryl-[protein] + H2O = L-seryl-[protein] + phosphate. The catalysed reaction is O-phospho-L-threonyl-[protein] + H2O = L-threonyl-[protein] + phosphate. In terms of biological role, processively dephosphorylates Ser-5 of the heptad repeats YSPTSPS in the C-terminal domain of the largest RNA polymerase II subunit (rpb-1). Functionally, component of the cleavage and polyadenylation factor (CPF) complex, which plays a key role in polyadenylation-dependent pre-mRNA 3'-end formation and cooperates with cleavage factors including the CFIA complex and NAB4/CFIB. Ssu-72 is required for 3'-end formation of snoRNAs. This is RNA polymerase II subunit A C-terminal domain phosphatase ssu-72 (ssu-72) from Neurospora crassa (strain ATCC 24698 / 74-OR23-1A / CBS 708.71 / DSM 1257 / FGSC 987).